Consider the following 360-residue polypeptide: BLOC-1-related complex subunit 6 (360 aa).

Residues 1 to 10 (MEAARGRLGP) show a composition bias toward basic and acidic residues. The interval 1-201 (MEAARGRLGP…AGAGGGRRAT (201 aa)) is disordered. Residues 23–35 (VTFSGRPSRTLSK) are compositionally biased toward polar residues. T41 carries the phosphothreonine modification. Positions 71 to 83 (HRPELDTWEDKPS) are enriched in basic and acidic residues. A compositionally biased stretch (low complexity) spans 89-100 (SGARGSRGTSGS). The residue at position 130 (S130) is a Phosphoserine. Positions 144–156 (EGDDDDDGDDEEA) are enriched in acidic residues. Phosphoserine is present on S173. The span at 179-198 (GACGGGGSSSSGEAGAGGGR) shows a compositional bias: gly residues. The residue at position 201 (T201) is a Phosphothreonine. Residue S204 is modified to Phosphoserine.

It belongs to the BORCS6 family. In terms of assembly, component of the BLOC-one-related complex (BORC) which is composed of BLOC1S1, BLOC1S2, BORCS5, BORCS6, BORCS7, BORCS8, KXD1 and SNAPIN.

Its subcellular location is the lysosome membrane. In terms of biological role, as part of the BORC complex may play a role in lysosomes movement and localization at the cell periphery. Associated with the cytosolic face of lysosomes, the BORC complex may recruit ARL8B and couple lysosomes to microtubule plus-end-directed kinesin motor. The sequence is that of BLOC-1-related complex subunit 6 from Rattus norvegicus (Rat).